The chain runs to 458 residues: Bifunctional protein GlmU (458 aa).

Positions methionine 1 to arginine 230 are pyrophosphorylase. Residues leucine 9–glycine 12, lysine 23, glutamine 73, and glycine 78–threonine 79 contribute to the UDP-N-acetyl-alpha-D-glucosamine site. Residue aspartate 103 coordinates Mg(2+). UDP-N-acetyl-alpha-D-glucosamine-binding residues include glycine 140, glutamate 155, asparagine 170, and asparagine 228. Residue asparagine 228 participates in Mg(2+) binding. A linker region spans residues valine 231–asparagine 251. The tract at residues glycine 252–aspartate 458 is N-acetyltransferase. Positions 333 and 351 each coordinate UDP-N-acetyl-alpha-D-glucosamine. The active-site Proton acceptor is histidine 363. UDP-N-acetyl-alpha-D-glucosamine-binding residues include tyrosine 366 and asparagine 377. Residues asparagine 386–tyrosine 387, serine 405, alanine 423, and arginine 440 contribute to the acetyl-CoA site.

It in the N-terminal section; belongs to the N-acetylglucosamine-1-phosphate uridyltransferase family. The protein in the C-terminal section; belongs to the transferase hexapeptide repeat family. In terms of assembly, homotrimer. Requires Mg(2+) as cofactor.

It localises to the cytoplasm. The enzyme catalyses alpha-D-glucosamine 1-phosphate + acetyl-CoA = N-acetyl-alpha-D-glucosamine 1-phosphate + CoA + H(+). The catalysed reaction is N-acetyl-alpha-D-glucosamine 1-phosphate + UTP + H(+) = UDP-N-acetyl-alpha-D-glucosamine + diphosphate. Its pathway is nucleotide-sugar biosynthesis; UDP-N-acetyl-alpha-D-glucosamine biosynthesis; N-acetyl-alpha-D-glucosamine 1-phosphate from alpha-D-glucosamine 6-phosphate (route II): step 2/2. It participates in nucleotide-sugar biosynthesis; UDP-N-acetyl-alpha-D-glucosamine biosynthesis; UDP-N-acetyl-alpha-D-glucosamine from N-acetyl-alpha-D-glucosamine 1-phosphate: step 1/1. The protein operates within bacterial outer membrane biogenesis; LPS lipid A biosynthesis. Catalyzes the last two sequential reactions in the de novo biosynthetic pathway for UDP-N-acetylglucosamine (UDP-GlcNAc). The C-terminal domain catalyzes the transfer of acetyl group from acetyl coenzyme A to glucosamine-1-phosphate (GlcN-1-P) to produce N-acetylglucosamine-1-phosphate (GlcNAc-1-P), which is converted into UDP-GlcNAc by the transfer of uridine 5-monophosphate (from uridine 5-triphosphate), a reaction catalyzed by the N-terminal domain. In Enterococcus faecalis (strain ATCC 700802 / V583), this protein is Bifunctional protein GlmU.